The primary structure comprises 197 residues: Small ribosomal subunit protein uS5 (197 aa).

Over residues 1 to 17 the composition is skewed to basic and acidic residues; sequence MAERENRGRGRGRNREE. Disordered stretches follow at residues 1-22 and 158-197; these read MAERENRGRGRGRNREEETPEF and NESSPRQVASRRGKKVADILPKRDDHPQIDGEQAPVSEEA. The 64-residue stretch at 22–85 folds into the S5 DRBM domain; sequence FADRLVAINR…EQAKRQLIRV (64 aa). Residues 172-186 are compositionally biased toward basic and acidic residues; that stretch reads KVADILPKRDDHPQI.

It belongs to the universal ribosomal protein uS5 family. Part of the 30S ribosomal subunit. Contacts proteins S4 and S8.

With S4 and S12 plays an important role in translational accuracy. In terms of biological role, located at the back of the 30S subunit body where it stabilizes the conformation of the head with respect to the body. The chain is Small ribosomal subunit protein uS5 from Jannaschia sp. (strain CCS1).